A 494-amino-acid polypeptide reads, in one-letter code: Membrane-bound lytic murein transglycosylase F 1 (494 aa).

A signal peptide spans 1-24 (MRIMAVRLVAGAITLALMAYAWLA). The interval 25 to 270 (WERARDPEPI…TLLEEHFGHL (246 aa)) is non-LT domain. The interval 271-494 (GRFDYVGFRA…APLPADPPAD (224 aa)) is LT domain. Residue E317 is part of the active site. Residues 464–494 (QVPAGEALGEPPLPTPPAPPGAPLPADPPAD) form a disordered region. Residues 474-494 (PPLPTPPAPPGAPLPADPPAD) show a composition bias toward pro residues.

In the N-terminal section; belongs to the bacterial solute-binding protein 3 family. It in the C-terminal section; belongs to the transglycosylase Slt family.

It is found in the cell outer membrane. The enzyme catalyses Exolytic cleavage of the (1-&gt;4)-beta-glycosidic linkage between N-acetylmuramic acid (MurNAc) and N-acetylglucosamine (GlcNAc) residues in peptidoglycan, from either the reducing or the non-reducing ends of the peptidoglycan chains, with concomitant formation of a 1,6-anhydrobond in the MurNAc residue.. Its function is as follows. Murein-degrading enzyme that degrades murein glycan strands and insoluble, high-molecular weight murein sacculi, with the concomitant formation of a 1,6-anhydromuramoyl product. Lytic transglycosylases (LTs) play an integral role in the metabolism of the peptidoglycan (PG) sacculus. Their lytic action creates space within the PG sacculus to allow for its expansion as well as for the insertion of various structures such as secretion systems and flagella. In Alkalilimnicola ehrlichii (strain ATCC BAA-1101 / DSM 17681 / MLHE-1), this protein is Membrane-bound lytic murein transglycosylase F 1.